We begin with the raw amino-acid sequence, 135 residues long: Protein PsiE homolog (135 aa).

4 consecutive transmembrane segments (helical) span residues 20–40, 54–74, 82–102, and 107–127; these read VGLL…TIHL, YLLI…ALIV, HFPL…LIIV, and PIDT…LYLA.

The protein belongs to the PsiE family.

It localises to the cell inner membrane. This is Protein PsiE homolog from Serratia proteamaculans (strain 568).